The primary structure comprises 315 residues: Probable serine acetyltransferase 4 (315 aa).

A disordered region spans residues 287-315 (AKPIIGKKAAPQRRPEELPGVTMEQRWSD).

It belongs to the transferase hexapeptide repeat family. As to quaternary structure, homomultimer.

It carries out the reaction L-serine + acetyl-CoA = O-acetyl-L-serine + CoA. It participates in amino-acid biosynthesis; L-cysteine biosynthesis; L-cysteine from L-serine: step 1/2. This is Probable serine acetyltransferase 4 (SAT4) from Oryza sativa subsp. japonica (Rice).